The sequence spans 865 residues: Protein translocase subunit SecA (865 aa).

ATP is bound by residues Gln93, 111 to 115 (GEGKT), and Asp501. Zn(2+)-binding residues include Cys841, Cys843, Cys852, and Cys853.

Belongs to the SecA family. As to quaternary structure, monomer and homodimer. Part of the essential Sec protein translocation apparatus which comprises SecA, SecYEG and auxiliary proteins SecDF-YajC and YidC. Zn(2+) serves as cofactor.

Its subcellular location is the cell inner membrane. The protein resides in the cytoplasm. It catalyses the reaction ATP + H2O + cellular proteinSide 1 = ADP + phosphate + cellular proteinSide 2.. Part of the Sec protein translocase complex. Interacts with the SecYEG preprotein conducting channel. Has a central role in coupling the hydrolysis of ATP to the transfer of proteins into and across the cell membrane, serving as an ATP-driven molecular motor driving the stepwise translocation of polypeptide chains across the membrane. In Helicobacter acinonychis (strain Sheeba), this protein is Protein translocase subunit SecA.